Consider the following 122-residue polypeptide: Large ribosomal subunit protein uL14 (122 aa).

This sequence belongs to the universal ribosomal protein uL14 family. In terms of assembly, part of the 50S ribosomal subunit. Forms a cluster with proteins L3 and L19. In the 70S ribosome, L14 and L19 interact and together make contacts with the 16S rRNA in bridges B5 and B8.

Its function is as follows. Binds to 23S rRNA. Forms part of two intersubunit bridges in the 70S ribosome. In Desulfitobacterium hafniense (strain DSM 10664 / DCB-2), this protein is Large ribosomal subunit protein uL14.